The sequence spans 150 residues: Deoxyuridine 5'-triphosphate nucleotidohydrolase (150 aa).

Residues 67 to 69 (RSS), Asn80, and 84 to 86 (VID) contribute to the substrate site.

This sequence belongs to the dUTPase family. Requires Mg(2+) as cofactor.

It carries out the reaction dUTP + H2O = dUMP + diphosphate + H(+). Its pathway is pyrimidine metabolism; dUMP biosynthesis; dUMP from dCTP (dUTP route): step 2/2. In terms of biological role, this enzyme is involved in nucleotide metabolism: it produces dUMP, the immediate precursor of thymidine nucleotides and it decreases the intracellular concentration of dUTP so that uracil cannot be incorporated into DNA. In Lactococcus lactis subsp. lactis (strain IL1403) (Streptococcus lactis), this protein is Deoxyuridine 5'-triphosphate nucleotidohydrolase (dut).